Here is a 227-residue protein sequence, read N- to C-terminus: Enolase-phosphatase E1 (227 aa).

2 residues coordinate Mg(2+): Asp11 and Glu13. Substrate contacts are provided by residues 118–119 (SS) and Lys161. A Mg(2+)-binding site is contributed by Asp186.

It belongs to the HAD-like hydrolase superfamily. MasA/MtnC family. As to quaternary structure, monomer. Mg(2+) serves as cofactor.

The protein resides in the cytoplasm. It localises to the nucleus. The enzyme catalyses 5-methylsulfanyl-2,3-dioxopentyl phosphate + H2O = 1,2-dihydroxy-5-(methylsulfanyl)pent-1-en-3-one + phosphate. It participates in amino-acid biosynthesis; L-methionine biosynthesis via salvage pathway; L-methionine from S-methyl-5-thio-alpha-D-ribose 1-phosphate: step 3/6. The protein operates within amino-acid biosynthesis; L-methionine biosynthesis via salvage pathway; L-methionine from S-methyl-5-thio-alpha-D-ribose 1-phosphate: step 4/6. Functionally, bifunctional enzyme that catalyzes the enolization of 2,3-diketo-5-methylthiopentyl-1-phosphate (DK-MTP-1-P) into the intermediate 2-hydroxy-3-keto-5-methylthiopentenyl-1-phosphate (HK-MTPenyl-1-P), which is then dephosphorylated to form the acireductone 1,2-dihydroxy-3-keto-5-methylthiopentene (DHK-MTPene). The polypeptide is Enolase-phosphatase E1 (Saccharomyces cerevisiae (strain RM11-1a) (Baker's yeast)).